The sequence spans 472 residues: Arginine biosynthesis bifunctional protein ArgJ, mitochondrial (472 aa).

Substrate contacts are provided by T200, K229, T240, E327, N467, and T472. T240 functions as the Nucleophile in the catalytic mechanism.

Belongs to the ArgJ family. As to quaternary structure, heterodimer of an alpha and a beta chain. The alpha and beta chains are autoproteolytically processed from a single precursor protein within the mitochondrion.

It localises to the mitochondrion matrix. It carries out the reaction N(2)-acetyl-L-ornithine + L-glutamate = N-acetyl-L-glutamate + L-ornithine. The enzyme catalyses L-glutamate + acetyl-CoA = N-acetyl-L-glutamate + CoA + H(+). The protein operates within amino-acid biosynthesis; L-arginine biosynthesis; L-ornithine and N-acetyl-L-glutamate from L-glutamate and N(2)-acetyl-L-ornithine (cyclic): step 1/1. Its pathway is amino-acid biosynthesis; L-arginine biosynthesis; N(2)-acetyl-L-ornithine from L-glutamate: step 1/4. Catalyzes two activities which are involved in the cyclic version of arginine biosynthesis: the synthesis of acetylglutamate from glutamate and acetyl-CoA, and of ornithine by transacetylation between acetylornithine and glutamate. The chain is Arginine biosynthesis bifunctional protein ArgJ, mitochondrial from Talaromyces marneffei (strain ATCC 18224 / CBS 334.59 / QM 7333) (Penicillium marneffei).